The primary structure comprises 477 residues: Inner membrane protein YbhI (477 aa).

The Cytoplasmic portion of the chain corresponds to 1 to 5; that stretch reads MNKKS. Residues 6 to 26 traverse the membrane as a helical segment; the sequence is LWKLILILAIPCIIGFMPAPA. Residue Gly27 is a topological domain, periplasmic. Residues 28–48 traverse the membrane as a helical segment; sequence LSELAWVLFGIYLAAIVGLVI. Residues 49–50 lie on the Cytoplasmic side of the membrane; the sequence is KP. The helical transmembrane segment at 51–71 threads the bilayer; sequence FPEPVVLLIAVAASMVVVGNL. Over 72 to 87 the chain is Periplasmic; that stretch reads SDGAFKTTAVLSGYSS. Residues 88–108 traverse the membrane as a helical segment; the sequence is GTTWLVFSAFTLSAAFVTTGL. At 109–148 the chain is on the cytoplasmic side; it reads GKRIAYLLIGKIGNTTLGLGYVTVFLDLVLAPATPSNTAR. A helical transmembrane segment spans residues 149–169; the sequence is AGGIVLPIINSVAVALGSEPE. Topologically, residues 170-219 are periplasmic; sequence KSPRRVGHYLMMSIYMVTKTTSYMFFTAMAGNILALKMINDILHLQISWG. Residues 220 to 240 traverse the membrane as a helical segment; sequence GWALAAGLPGIIMLLVTPLVI. Over 241–272 the chain is Cytoplasmic; the sequence is YTMYPPEIKKVDNKTIAKAGLAELGPMKIREK. Residues 273 to 293 form a helical membrane-spanning segment; it reads MLLGVFVLALLGWIFSKSLGV. At 294 to 297 the chain is on the periplasmic side; that stretch reads DEST. The helical transmembrane segment at 298–318 threads the bilayer; that stretch reads VAIVVMATMLLLGIVTWEDVV. Residues 319 to 356 are Cytoplasmic-facing; the sequence is KNKGGWNTLIWYGGIIGLSSLLSKVKFFEWLAEVFKNN. Residues 357-377 traverse the membrane as a helical segment; the sequence is LAFDGHGNVAFFVIIFLSIIV. Arg378 is a topological domain (periplasmic). The helical transmembrane segment at 379-399 threads the bilayer; it reads YFFASGSAYIVAMLPVFAMLA. Residues 400–445 are Cytoplasmic-facing; the sequence is NVSGAPLMLTALALLFSNSYGGMVTHYGGAAGPVIFGVGYNDIKSW. The chain crosses the membrane as a helical span at residues 446 to 466; sequence WLVGAVLTILTFLVHITLGVW. The Periplasmic portion of the chain corresponds to 467–477; the sequence is WWNMLIGWNML.

Belongs to the SLC13A/DASS transporter (TC 2.A.47) family. DIT1 subfamily.

The protein localises to the cell inner membrane. This chain is Inner membrane protein YbhI (ybhI), found in Escherichia coli (strain K12).